An 896-amino-acid chain; its full sequence is NET1-associated nuclear protein 1 (896 aa).

WD repeat units follow at residues 295–334 (WHID…QQFL), 490–542 (LQDP…TNWN), 552–595 (GISV…SNWC), and 605–645 (NHFS…ESLE).

Interacts with snoRNA U3. Interacts with MPP10. Component of the ribosomal small subunit (SSU) processome composed of at least 40 protein subunits and snoRNA U3. In the absence of snoRNA3, forms a complex with other t-UTPs. This complex can associate with pre-18S ribosomal RNAs.

It localises to the nucleus. Its subcellular location is the nucleolus. Involved in nucleolar processing of pre-18S ribosomal RNA. Required for optimal pre-ribosomal RNA transcription by RNA polymerase I together with a subset of U3 proteins required for transcription (t-UTPs). The chain is NET1-associated nuclear protein 1 (NAN1) from Saccharomyces cerevisiae (strain ATCC 204508 / S288c) (Baker's yeast).